We begin with the raw amino-acid sequence, 86 residues long: DNA-directed RNA polymerase subunit omega (86 aa).

The span at 67–76 (SAREHAKESQ) shows a compositional bias: basic and acidic residues. The interval 67 to 86 (SAREHAKESQVSEEEVREES) is disordered. Residues 77–86 (VSEEEVREES) show a composition bias toward acidic residues.

It belongs to the RNA polymerase subunit omega family. In terms of assembly, the RNAP catalytic core consists of 2 alpha, 1 beta, 1 beta' and 1 omega subunit. When a sigma factor is associated with the core the holoenzyme is formed, which can initiate transcription.

It catalyses the reaction RNA(n) + a ribonucleoside 5'-triphosphate = RNA(n+1) + diphosphate. Its function is as follows. Promotes RNA polymerase assembly. Latches the N- and C-terminal regions of the beta' subunit thereby facilitating its interaction with the beta and alpha subunits. This Nitrosococcus oceani (strain ATCC 19707 / BCRC 17464 / JCM 30415 / NCIMB 11848 / C-107) protein is DNA-directed RNA polymerase subunit omega.